Reading from the N-terminus, the 206-residue chain is Probable glutathione S-transferase 7 (206 aa).

Residues 2 to 79 (VHYKVSYFPI…YLARQFGING (78 aa)) form the GST N-terminal domain. Glutathione-binding positions include Tyr8, Trp39, Lys43, 49–51 (GQL), and 63–64 (QS). Residues 81-206 (CAWEEAQVNS…WLETRPVTPF (126 aa)) enclose the GST C-terminal domain.

This sequence belongs to the GST superfamily. Sigma family.

The catalysed reaction is RX + glutathione = an S-substituted glutathione + a halide anion + H(+). Functionally, conjugation of reduced glutathione to a wide number of exogenous and endogenous hydrophobic electrophiles. May play a role in the detoxification of reactive oxygen species produced during pathogenic bacterial infection. This Caenorhabditis elegans protein is Probable glutathione S-transferase 7 (gst-7).